Reading from the N-terminus, the 247-residue chain is Homeobox-leucine zipper protein HOX17 (247 aa).

The disordered stretch occupies residues 58 to 81; sequence ERAGLRGGGGSDEEDGGCGIDGSR. The homeobox DNA-binding region spans 79 to 138; sequence GSRKKLRLSKDQSAVLEDSFREHPTLNPRQKATLAQQLGLRPRQVEVWFQNRRARTKLKQ. Residues 137–182 form a leucine-zipper region; that stretch reads KQTEVDCEFLKRCCETLTEENRRLQKEVQELRALKLVSPHLYMNMS.

Belongs to the HD-ZIP homeobox family. Class II subfamily. In terms of tissue distribution, expressed in seedlings, roots, stems, leaf sheaths and blades and panicles.

Its subcellular location is the nucleus. Probable transcription factor. This is Homeobox-leucine zipper protein HOX17 (HOX17) from Oryza sativa subsp. japonica (Rice).